Here is a 274-residue protein sequence, read N- to C-terminus: Thiamine kinase (274 aa).

It belongs to the thiamine kinase family.

The catalysed reaction is thiamine + ATP = thiamine phosphate + ADP + H(+). It participates in cofactor biosynthesis; thiamine diphosphate biosynthesis; thiamine phosphate from thiamine: step 1/1. Functionally, catalyzes the ATP-dependent phosphorylation of thiamine to thiamine phosphate. Is involved in thiamine salvage. The protein is Thiamine kinase of Escherichia coli (strain SMS-3-5 / SECEC).